Here is a 579-residue protein sequence, read N- to C-terminus: General transcriptional corepressor tupA (579 aa).

A compositionally biased stretch (polar residues) spans asparagine 83–serine 101. A disordered region spans residues asparagine 83 to tryptophan 258. 3 stretches are compositionally biased toward low complexity: residues asparagine 109 to asparagine 128, glutamine 157 to leucine 198, and methionine 207 to asparagine 224. The segment covering lysine 227–threonine 256 has biased composition (basic and acidic residues). WD repeat units lie at residues glutamine 279–valine 319, aspartate 325–threonine 364, glycine 367–threonine 406, glycine 413–arginine 452, glycine 455–arginine 494, glycine 501–methionine 540, and glycine 543–serine 579.

It belongs to the WD repeat TUP1 family. In terms of assembly, associates with trfA to form the trfA-tupA corepressor complex.

It localises to the nucleus. Acts as a component of the trfA-tupA corepressor complex which is involved in the repression of many genes in a wide variety of physiological processes. May also be involved in the derepression of at least some target genes. The complex is recruited to target genes by interaction with DNA-bound transcriptional repressors. The complex recruits histone deacetylases to produce a repressive chromatin structure, interacts with hypoacetylated N-terminal tails of histones H3 and H4 that have been programmed for repression by the action of histone deacetylases and interferes directly with the transcriptional machinery by associating with the RNA polymerase II mediator complex. The sequence is that of General transcriptional corepressor tupA (tupA) from Dictyostelium discoideum (Social amoeba).